The following is a 63-amino-acid chain: DNA gyrase inhibitor YacG (63 aa).

C9, C12, C28, and C32 together coordinate Zn(2+).

This sequence belongs to the DNA gyrase inhibitor YacG family. As to quaternary structure, interacts with GyrB. The cofactor is Zn(2+).

In terms of biological role, inhibits all the catalytic activities of DNA gyrase by preventing its interaction with DNA. Acts by binding directly to the C-terminal domain of GyrB, which probably disrupts DNA binding by the gyrase. In Salmonella paratyphi A (strain AKU_12601), this protein is DNA gyrase inhibitor YacG.